Here is a 2034-residue protein sequence, read N- to C-terminus: Sperm vesicle fusion protein fer-1 (2034 aa).

Residues 1–80 form a disordered region; the sequence is MTVKEKLLKV…GGSDIELLPD (80 aa). The Cytoplasmic portion of the chain corresponds to 1-1998; sequence MTVKEKLLKV…CIKYFWHYYG (1998 aa). Residues 66 to 79 are compositionally biased toward acidic residues; that stretch reads ELSDDGGSDIELLP. C2 domains follow at residues 229-367, 954-1082, 1120-1246, and 1363-1484; these read RIDE…YLPT, DSED…PQWF, YKER…KSDH, and KKGK…ATGG. Positions 1563-1619 are disordered; sequence QKAGKENFSDGSDQQNEDVSDGSWDEEDLEREKEKLKWEKHRSKGKPLKKVTTEKAE. The segment covering 1577–1591 has biased composition (acidic residues); it reads QNEDVSDGSWDEEDL. Residues 1600-1611 show a composition bias toward basic residues; sequence WEKHRSKGKPLK. Residues 1684–1831 enclose the C2 5 domain; the sequence is EYGAIPAPFN…EGIGSPSDVG (148 aa). Residues 1953–1972 are disordered; it reads QEPAGKKRSEPNHSPFLEKP. A helical membrane pass occupies residues 1999–2019; that stretch reads LQILLWLIIIVILILTIFVLL. Over 2020 to 2034 the chain is Extracellular; sequence HTWPTILAEIIKAIF.

It belongs to the ferlin family. As to expression, exclusively expressed in the testis.

The protein resides in the membrane. Functionally, required for the fusion of the membranous organelles (MOs) with the plasma membrane, a process essential in spermiogenesis. The chain is Sperm vesicle fusion protein fer-1 (fer-1) from Caenorhabditis elegans.